The sequence spans 55 residues: Chromatin protein Cren7 (55 aa).

It belongs to the Cren7 family. In terms of assembly, monomer. Post-translationally, methylated at multiple sites, to varying extents.

The protein resides in the chromosome. It is found in the cytoplasm. Its function is as follows. A chromatin protein, binds double-stranded DNA without sequence specificity. Constrains negative DNA supercoils. This Ignicoccus hospitalis (strain KIN4/I / DSM 18386 / JCM 14125) protein is Chromatin protein Cren7.